A 367-amino-acid chain; its full sequence is Trans-enoyl reductase ffsC (367 aa).

55–58 is a binding site for NADP(+); the sequence is CDWK. A substrate-binding site is contributed by 143-150; the sequence is TGIGTLGL. NADP(+) contacts are provided by residues 203–206, tyrosine 221, and 268–269; these read SAKN and LE. Residue 288–292 coordinates substrate; the sequence is GMAIL. Position 357–358 (357–358) interacts with NADP(+); it reads VS.

Belongs to the zinc-containing alcohol dehydrogenase family. In terms of assembly, monomer.

The protein operates within mycotoxin biosynthesis. Trans-enoyl reductase; part of the gene cluster that mediates the biosynthesis of the cytotoxic leucine-containing cytochalasans, including aspochalasin C, aspochalasin E, TMC-169, flavichalasine F, aspergillin PZ, aspochalasin M and flavichalasine G. The first step in the pathway is catalyzed by the hybrid PKS-NRPS ffsA that utilizes 8 units of malonyl-CoA to iteratively assemble the octaketide chain before addition of L-leucine by the C-terminal NRPS modules. Because ffsA lacks a designated enoylreductase (ER) domain, the required activity is provided the enoyl reductase fssC. The methyltransferase (MT) domain of ffsA catalyzes the alpha-methylation at C10 and C14 using S-adenosyl-L-methionine as the methyl-donating cosubstrate. Reduction by the hydrolyase ffsE, followed by dehydration and intra-molecular Diels-Alder cyclization by the Diels-Alderase ffsF then yield the required isoindolone-fused macrocycle. A number of oxidative steps catalyzed by the tailoring cytochrome P450 monooxygenase ffsD, the FAD-linked oxidoreductase ffsJ and the short-chain dehydrogenase/reductase ffsI, are further required to afford the final products. The protein is Trans-enoyl reductase ffsC of Aspergillus flavipes.